We begin with the raw amino-acid sequence, 904 residues long: Polycystin-2 (904 aa).

The segment at 1 to 102 (MSSSRVRPQA…SSSGGVPGNF (102 aa)) is disordered. Residues 1 to 155 (MSSSRVRPQA…NSNREMYLKT (155 aa)) are Cytoplasmic-facing. The span at 8 to 20 (PQAPQSPAASASA) shows a compositional bias: low complexity. Residues 26–38 (EGIEMEKMHHEEV) are compositionally biased toward basic and acidic residues. Over residues 86–96 (SVSTTSSSSSG) the composition is skewed to low complexity. A helical membrane pass occupies residues 156 to 177 (VLREMITYILFLLTLCIITYGM). Over 178-404 (VSTNMYYYTK…TVRLLRYVSS (227 aa)) the chain is Extracellular. N-linked (GlcNAc...) asparagine glycosylation is found at N235, N241, and N264. An intrachain disulfide couples C267 to C280. An N-linked (GlcNAc...) asparagine glycan is attached at N298. The chain crosses the membrane as a helical span at residues 405-425 (WDYFVGMCEVSFCLFVLYYLV). The Cytoplasmic portion of the chain corresponds to 426–441 (EEALEIRLHRLRYFKS). The helical transmembrane segment at 442–462 (LWNCLDVLIVALSVPAIIMNI) threads the bilayer. The Extracellular segment spans residues 463 to 489 (CRTSAVSHRLHFLLENHSTYPNFEPLA). N-linked (GlcNAc...) asparagine glycosylation occurs at N478. Residues 490 to 510 (RLQVHFNNLAAIIVFLSWVKL) form a helical membrane-spanning segment. Over 511 to 534 (FKFINFNKTMNQLSTTMSRCAKDL) the chain is Cytoplasmic. The helical transmembrane segment at 535-556 (MGFAIMFFIVFLAYAQLAYLVF) threads the bilayer. At 557–568 (GTQVNDFSTFQA) the chain is on the extracellular side. Positions 569-583 (CIFTQFRIILGDFDF) form an intramembrane region, pore-forming. L578 lines the Ca(2+) pocket. Positions 578–580 (LGD) match the Selectivity filter motif. At 584–591 (SEIEEADS) the chain is on the extracellular side. The helical transmembrane segment at 592 to 612 (VLGPIYFTTFVFFIFMILLNM) threads the bilayer. Topologically, residues 613–904 (FLAIINDTYS…DAAASGPAHL (292 aa)) are cytoplasmic. An EF-hand 1 domain is found at 687–722 (HSDAEIEAIFAKYDLDGDQELTEHEHQQMRDDLEKE). Ca(2+) is bound by residues D700, D702, D704, E706, and E711. The segment covering 708 to 732 (TEHEHQQMRDDLEKEREDLDLEHSS) has biased composition (basic and acidic residues). Disordered stretches follow at residues 708–770 (TEHE…SSGG) and 854–904 (ESDD…PAHL). Residues 740 to 759 (RSFSRSQDDSEEDDDEDSGH) are linker. Positions 768-786 (SGGVSYEEFQVLVRRVDRM) constitute an EF-hand 2 domain. The stretch at 770–809 (GVSYEEFQVLVRRVDRMEHSIGSIVSKIDAVIVKLEAMER) forms a coiled coil. The span at 878–890 (LRPRSSRPPSSLS) shows a compositional bias: low complexity.

The protein belongs to the polycystin family. As to quaternary structure, homotetramer. Component of the heterotetrameric polycystin channel complex with pkd1; the tetramer contains one pkd1 chain and three pkd2 chains. Interacts with pkd1l1. Phosphorylated. Phosphorylation is important for protein function; a mutant human construct that lacks the N-terminal phosphorylation sites cannot complement a zebrafish pkd2-deficient mutant. Post-translationally, N-glycosylated. The four subunits in a tetramer probably differ in the extent of glycosylation; simultaneous glycosylation of all experimentally validated sites would probably create steric hindrance. In terms of processing, sumoylated by SUMO1; sumoylation regulates PKD2 membrane recycling. In terms of tissue distribution, detected along cilia and at the cilium basal body in Kupffer's vesicle at the 10 somite stage. Detected in heart at 48hpf. Detected in muscle and pronephric kidney at 48 hpf. Detected on trunk muscle sarcolemma and sarcomere, on ependymal cell cilia in brain, at the apical cell membrane in epithelial cells in the ear, at the lateral line organ and olfactory placode at 56 hpf. Detected in adult kidney (at protein level).

The protein localises to the basolateral cell membrane. It is found in the cell membrane. Its subcellular location is the sarcolemma. The protein resides in the cytoplasm. It localises to the myofibril. The protein localises to the sarcomere. It is found in the sarcoplasmic reticulum membrane. Its subcellular location is the apical cell membrane. The protein resides in the endoplasmic reticulum membrane. It localises to the cell projection. The protein localises to the cilium. It is found in the cytoskeleton. Its subcellular location is the cilium basal body. The protein resides in the cytoplasmic vesicle membrane. The catalysed reaction is K(+)(in) = K(+)(out). The enzyme catalyses Na(+)(in) = Na(+)(out). It carries out the reaction Ca(2+)(in) = Ca(2+)(out). With respect to regulation, channel activity is regulated by phosphorylation. Channel activity is regulated by intracellular Ca(2+). In terms of biological role, forms a nonselective cation channel. Can function as a homotetrameric ion channel or can form heteromer with PKD1. Displays distinct function depending on its subcellular localization and regulation by its binding partners. In the primary cilium functions as a cation channel, with a preference for monovalent cations over divalent cations that allows K(+), Na(+) and Ca(2+) influx, with low selectivity for Ca(2+). In the endoplasmic reticulum, likely functions as a K(+) channel to facilitate Ca(2+) release. Required for normal oscillation of Ca(2+) levels within cilia; these oscillations of the intraciliary Ca(2+) levels can trigger cytoplasmic Ca(2+) signaling cascades. Required for normal temporal variation of the intracellular Ca(2+) levels in the heart. Plays a role in fluid-flow mechanosensation. Required for normal specification of the body left-right axis during embryogenesis, most likely via its role in ciliary Ca(2+) oscillations in Kupffer's vesicle. This Danio rerio (Zebrafish) protein is Polycystin-2.